A 137-amino-acid chain; its full sequence is Large ribosomal subunit protein uL16 (137 aa).

Basic residues predominate over residues Met-1 to Leu-17. Positions Met-1–Gly-24 are disordered.

This sequence belongs to the universal ribosomal protein uL16 family. As to quaternary structure, part of the 50S ribosomal subunit.

Functionally, binds 23S rRNA and is also seen to make contacts with the A and possibly P site tRNAs. The chain is Large ribosomal subunit protein uL16 from Leptospira borgpetersenii serovar Hardjo-bovis (strain JB197).